A 343-amino-acid polypeptide reads, in one-letter code: UPF0324 membrane protein LJ_1117 (343 aa).

The next 10 helical transmembrane spans lie at 10 to 27 (FGLAAVMTLICSVAGIFL), 32 to 54 (YVNLIGALVIALLLGISLQVLPV), 64 to 86 (IGFISNKFLRLGIILLGFRLNLT), 91 to 113 (AGIKTILVAMLGVSGTIVLTYWL), 123 to 145 (LAVLSACGCGICGAAAVMGVSPQ), 157 to 179 (NEVLAVAVVCVMGTVFTLLEIVI), 219 to 241 (ALIMKLSRVLLLAPVALIIGYWY), 262 to 284 (IPWFLGGFILTSILGTFLPFPPV), 288 to 310 (GLVQAAYVFLGMAMAALGISVNF), and 317 to 339 (GGTVFGAAAISSTCLMIFMIIMS).

Belongs to the UPF0324 family.

Its subcellular location is the cell membrane. This is UPF0324 membrane protein LJ_1117 from Lactobacillus johnsonii (strain CNCM I-12250 / La1 / NCC 533).